We begin with the raw amino-acid sequence, 248 residues long: tRNA (guanine-N(1)-)-methyltransferase (248 aa).

Residues G116 and 135 to 140 (IGDFVL) contribute to the S-adenosyl-L-methionine site.

Belongs to the RNA methyltransferase TrmD family. As to quaternary structure, homodimer.

The protein resides in the cytoplasm. The enzyme catalyses guanosine(37) in tRNA + S-adenosyl-L-methionine = N(1)-methylguanosine(37) in tRNA + S-adenosyl-L-homocysteine + H(+). Specifically methylates guanosine-37 in various tRNAs. This Anaeromyxobacter sp. (strain Fw109-5) protein is tRNA (guanine-N(1)-)-methyltransferase.